We begin with the raw amino-acid sequence, 97 residues long: Defensin-like protein 301 (97 aa).

An N-terminal signal peptide occupies residues 1-24 (MEKVTSIFFVLLLISSCLILRSQG). Disulfide bonds link Cys-28/Cys-47, Cys-34/Cys-53, Cys-39/Cys-55, Cys-65/Cys-84, Cys-71/Cys-92, and Cys-76/Cys-94.

This sequence belongs to the DEFL family.

The protein resides in the secreted. This is Defensin-like protein 301 from Arabidopsis thaliana (Mouse-ear cress).